The chain runs to 741 residues: Catalase-peroxidase 2 (741 aa).

Positions 1-27 are cleaved as a signal peptide; it reads MKINTLPTLSALTLAMSLALGAGMATA. The segment at residues 106–229 is a cross-link (tryptophyl-tyrosyl-methioninium (Trp-Tyr) (with M-255)); sequence WHSAGVYRIF…MGATQMGLIY (124 aa). His-107 acts as the Proton acceptor in catalysis. The segment at residues 229–255 is a cross-link (tryptophyl-tyrosyl-methioninium (Tyr-Met) (with W-106)); that stretch reads YVNPEGPNGVPDPLASAKEIRDTFGRM. Residue His-270 participates in heme b binding.

This sequence belongs to the peroxidase family. Peroxidase/catalase subfamily. As to quaternary structure, homodimer or homotetramer. It depends on heme b as a cofactor. In terms of processing, formation of the three residue Trp-Tyr-Met cross-link is important for the catalase, but not the peroxidase activity of the enzyme.

The enzyme catalyses H2O2 + AH2 = A + 2 H2O. The catalysed reaction is 2 H2O2 = O2 + 2 H2O. Bifunctional enzyme with both catalase and broad-spectrum peroxidase activity. In Shewanella oneidensis (strain ATCC 700550 / JCM 31522 / CIP 106686 / LMG 19005 / NCIMB 14063 / MR-1), this protein is Catalase-peroxidase 2.